Consider the following 216-residue polypeptide: Large ribosomal subunit protein uL24m (216 aa).

The transit peptide at 1 to 9 directs the protein to the mitochondrion; it reads MRLSALLAL. Position 24 is a phosphoserine (Ser-24). A KOW domain is found at 56 to 89; sequence LFCGDRVEILEGKDAGKQGKVVQVIRQRNWVVVE.

Belongs to the universal ribosomal protein uL24 family. As to quaternary structure, component of the mitochondrial ribosome large subunit (39S) which comprises a 16S rRNA and about 50 distinct proteins.

The protein resides in the mitochondrion. This chain is Large ribosomal subunit protein uL24m (MRPL24), found in Bos taurus (Bovine).